The sequence spans 196 residues: Cysteine/O-acetylserine efflux protein (196 aa).

A helical transmembrane segment spans residues 1-21 (MTPTLISAFLTYTLITALTPG). At 22-41 (PNNILALSSVTSHGLRRSLR) the chain is on the cytoplasmic side. Residues 42–62 (VLAGMSVGFIITMLICAALTF) traverse the membrane as a helical segment. At 63 to 70 (SLVELDSR) the chain is on the periplasmic side. The chain crosses the membrane as a helical span at residues 71-91 (FTLVLGWIGAAYILWLAWQIA). Residues 92-114 (KSKPATGTPSVEPVGFWASLGLQ) are Cytoplasmic-facing. A helical membrane pass occupies residues 115–135 (FVNVKIILYGITALSTFVLPV). Topologically, residues 136-139 (TREP) are periplasmic. The helical transmembrane segment at 140–160 (VWLISVSLLLAAIGALGNLCW) threads the bilayer. The Cytoplasmic segment spans residues 161–170 (ALAGHLFQRL). The helical transmembrane segment at 171-191 (FLLYGRQLNWMLAALLVYCAV) threads the bilayer. At 192–196 (RIVVE) the chain is on the periplasmic side.

Belongs to the Rht family.

Its subcellular location is the cell inner membrane. It carries out the reaction O-acetyl-L-serine(in) = O-acetyl-L-serine(out). The catalysed reaction is L-cysteine(in) = L-cysteine(out). Its function is as follows. Exporter of O-acetylserine (OAS) and cysteine. The chain is Cysteine/O-acetylserine efflux protein (eamB) from Klebsiella pneumoniae subsp. pneumoniae (strain ATCC 700721 / MGH 78578).